The chain runs to 75 residues: Small ribosomal subunit protein bS18 (75 aa).

A2 carries the N-acetylalanine modification.

The protein belongs to the bacterial ribosomal protein bS18 family. Part of the 30S ribosomal subunit. Forms a tight heterodimer with protein bS6.

Binds as a heterodimer with protein bS6 to the central domain of the 16S rRNA, where it helps stabilize the platform of the 30S subunit. The sequence is that of Small ribosomal subunit protein bS18 (rpsR) from Salmonella typhimurium (strain LT2 / SGSC1412 / ATCC 700720).